The chain runs to 357 residues: Queuosine-tRNA galactosyltransferase (357 aa).

Belongs to the glycosyltransferase 2 family.

The protein localises to the cytoplasm. The catalysed reaction is queuosine(34) in tRNA(Tyr) + UDP-alpha-D-galactose = O-5''-beta-D-galactosylqueuosine(34) in tRNA(Tyr) + UDP + H(+). In terms of biological role, glycosyltransferase that specifically catalyzes galactosylation of cytoplasmic tRNA(Tyr) modified with queuosine at position 34 (queuosine(34)). Galactosylates the cyclopentene hydroxyl group of queuosine(34) in tRNA(Tyr) to form galactosyl-queuosine(34). Mannosylation of queuosine(34) in tRNA(Tyr) is required to slow-down elongation at cognate codons UAC and suppress stop codon readthrough, thereby regulating protein translation. This Rattus norvegicus (Rat) protein is Queuosine-tRNA galactosyltransferase.